Consider the following 701-residue polypeptide: UvrABC system protein B (701 aa).

The Helicase ATP-binding domain occupies 28–188; sequence RRIRAGERDV…VDVQYTRNDL (161 aa). 41-48 contacts ATP; it reads GATGTGKS. The short motif at 94-117 is the Beta-hairpin element; the sequence is YYDYYQPEAYIAQTDTYIEKDSSI. One can recognise a Helicase C-terminal domain in the interval 432 to 598; that stretch reads QIDDLIGEIR…PLRKKIADIL (167 aa). The segment at 606–636 is disordered; the sequence is DDTEAAESVPIGGSGRNSSRGRRAQGEPGRA. The UVR domain maps to 656–691; it reads ADLIKDLTSQMMVAARDLQFELAARFRDEIADLKKE.

The protein belongs to the UvrB family. In terms of assembly, forms a heterotetramer with UvrA during the search for lesions. Interacts with UvrC in an incision complex.

It is found in the cytoplasm. Functionally, the UvrABC repair system catalyzes the recognition and processing of DNA lesions. A damage recognition complex composed of 2 UvrA and 2 UvrB subunits scans DNA for abnormalities. Upon binding of the UvrA(2)B(2) complex to a putative damaged site, the DNA wraps around one UvrB monomer. DNA wrap is dependent on ATP binding by UvrB and probably causes local melting of the DNA helix, facilitating insertion of UvrB beta-hairpin between the DNA strands. Then UvrB probes one DNA strand for the presence of a lesion. If a lesion is found the UvrA subunits dissociate and the UvrB-DNA preincision complex is formed. This complex is subsequently bound by UvrC and the second UvrB is released. If no lesion is found, the DNA wraps around the other UvrB subunit that will check the other stand for damage. This Mycobacterium ulcerans (strain Agy99) protein is UvrABC system protein B.